A 612-amino-acid chain; its full sequence is Chaperone protein DnaK (612 aa).

Residue Thr174 is modified to Phosphothreonine; by autocatalysis. Residues 579–612 (GSAGTGAGSQAGSAAGSGDGQSMDAEFKVKDEDK) form a disordered region. Residues 581-597 (AGTGAGSQAGSAAGSGD) are compositionally biased toward gly residues. Over residues 603–612 (AEFKVKDEDK) the composition is skewed to basic and acidic residues.

It belongs to the heat shock protein 70 family.

Acts as a chaperone. This chain is Chaperone protein DnaK, found in Symbiobacterium thermophilum (strain DSM 24528 / JCM 14929 / IAM 14863 / T).